Consider the following 252-residue polypeptide: Imidazole glycerol phosphate synthase subunit HisF (252 aa).

Residues Asp-11 and Asp-130 contribute to the active site.

The protein belongs to the HisA/HisF family. Heterodimer of HisH and HisF.

The protein resides in the cytoplasm. The enzyme catalyses 5-[(5-phospho-1-deoxy-D-ribulos-1-ylimino)methylamino]-1-(5-phospho-beta-D-ribosyl)imidazole-4-carboxamide + L-glutamine = D-erythro-1-(imidazol-4-yl)glycerol 3-phosphate + 5-amino-1-(5-phospho-beta-D-ribosyl)imidazole-4-carboxamide + L-glutamate + H(+). It participates in amino-acid biosynthesis; L-histidine biosynthesis; L-histidine from 5-phospho-alpha-D-ribose 1-diphosphate: step 5/9. IGPS catalyzes the conversion of PRFAR and glutamine to IGP, AICAR and glutamate. The HisF subunit catalyzes the cyclization activity that produces IGP and AICAR from PRFAR using the ammonia provided by the HisH subunit. The polypeptide is Imidazole glycerol phosphate synthase subunit HisF (Bacillus cereus (strain G9842)).